We begin with the raw amino-acid sequence, 111 residues long: UPF0060 membrane protein xcc-b100_1273 (111 aa).

4 consecutive transmembrane segments (helical) span residues 8-28 (LLLF…PYLW), 34-54 (SVWL…LLTL), 62-82 (VYAA…WWVD), and 91-111 (LLGA…PRSG).

This sequence belongs to the UPF0060 family.

It localises to the cell inner membrane. In Xanthomonas campestris pv. campestris (strain B100), this protein is UPF0060 membrane protein xcc-b100_1273.